We begin with the raw amino-acid sequence, 285 residues long: Nucleotide-binding protein GSU1884 (285 aa).

8 to 15 (GLSGSGKS) lines the ATP pocket. 59-62 (DIRG) is a GTP binding site.

The protein belongs to the RapZ-like family.

In terms of biological role, displays ATPase and GTPase activities. The polypeptide is Nucleotide-binding protein GSU1884 (Geobacter sulfurreducens (strain ATCC 51573 / DSM 12127 / PCA)).